A 55-amino-acid chain; its full sequence is Large ribosomal subunit protein bL33 (55 aa).

It belongs to the bacterial ribosomal protein bL33 family.

This is Large ribosomal subunit protein bL33 from Chelativorans sp. (strain BNC1).